The following is a 202-amino-acid chain: ATP-dependent Clp protease proteolytic subunit (202 aa).

S106 serves as the catalytic Nucleophile. Residue H131 is part of the active site.

It belongs to the peptidase S14 family. In terms of assembly, fourteen ClpP subunits assemble into 2 heptameric rings which stack back to back to give a disk-like structure with a central cavity, resembling the structure of eukaryotic proteasomes.

Its subcellular location is the cytoplasm. It catalyses the reaction Hydrolysis of proteins to small peptides in the presence of ATP and magnesium. alpha-casein is the usual test substrate. In the absence of ATP, only oligopeptides shorter than five residues are hydrolyzed (such as succinyl-Leu-Tyr-|-NHMec, and Leu-Tyr-Leu-|-Tyr-Trp, in which cleavage of the -Tyr-|-Leu- and -Tyr-|-Trp bonds also occurs).. Its function is as follows. Cleaves peptides in various proteins in a process that requires ATP hydrolysis. Has a chymotrypsin-like activity. Plays a major role in the degradation of misfolded proteins. The chain is ATP-dependent Clp protease proteolytic subunit from Shewanella sp. (strain W3-18-1).